A 241-amino-acid polypeptide reads, in one-letter code: MALLPLPLPFAELEVGHHLYWQIGDLYLHGQVFLSSWILIGILLAVVLVGTRGMKRDPIGLQNLLEFLWNFIRDIARDNIGEKYYRDWLPFIGTLFLFIFVSNWGGALIPWKIFELPEGELGAPTADINTTVAMALLVSLAYFYAGLSRKGLRFFELYVEPTPIMLPFKIIEEFTKPLSLSFRLFGNILADELAVGVLVYLVPLIVPLPVMLLGLFTSAIQALIFATLASFYIGEGLHEAH.

5 helical membrane passes run 30-50 (GQVF…VLVG), 89-109 (LPFI…GALI), 128-148 (INTT…AGLS), 193-213 (LAVG…VMLL), and 214-234 (GLFT…FYIG).

Belongs to the ATPase A chain family. As to quaternary structure, F-type ATPases have 2 components, CF(1) - the catalytic core - and CF(0) - the membrane proton channel. CF(1) has five subunits: alpha(3), beta(3), gamma(1), delta(1), epsilon(1). CF(0) has four main subunits: a, b, b' and c.

Its subcellular location is the cellular thylakoid membrane. In terms of biological role, key component of the proton channel; it plays a direct role in the translocation of protons across the membrane. The protein is ATP synthase subunit a of Synechococcus sp. (strain CC9605).